Here is a 226-residue protein sequence, read N- to C-terminus: Clarin-3 (226 aa).

A helical transmembrane segment spans residues 8 to 28 (LMFLSSFFTSLGSFIVICSIL). N-linked (GlcNAc...) asparagine glycosylation occurs at Asn-83. The next 3 membrane-spanning stretches (helical) occupy residues 92–112 (VTILFLVLSLITSLLSSGFTF), 129–149 (VYTWNGLGASFVFVTMILFVA), and 181–201 (FWLILLVILLNIVTVTIIIFY).

Belongs to the clarin family.

It is found in the membrane. This chain is Clarin-3 (CLRN3), found in Homo sapiens (Human).